The primary structure comprises 258 residues: Leucine-rich repeat-containing protein 3B (258 aa).

Positions 1–33 are cleaved as a signal peptide; sequence MTPLDLWLSRSIPMCLLLQSLVLMVLCFPSAST. Positions 34 to 68 constitute an LRRNT domain; sequence CPKGCTCQRSESPPHGLNVTCSLSRLKEIPPDVPP. Asn-51 carries an N-linked (GlcNAc...) asparagine glycan. LRR repeat units follow at residues 69–90, 93–114, and 118–139; these read DTQLLQLDRNHISLVPDRIFHG, MLRRLNLSHNAVETLGEGAFIG, and SLEVLDLSYNRITSVHKDAFAR. A glycan (N-linked (GlcNAc...) asparagine) is linked at Asn-98. Positions 149-196 constitute an LRRCT domain; sequence NPWHCDCALQQALGGMAHNHERVLCRSSELRDQEGQPFMAVDADLCNL. The helical transmembrane segment at 204–224 threads the bilayer; that stretch reads AMLVTMFGWFAMVISYVVYYV.

Belongs to the LRRC3 family.

It localises to the membrane. In Danio rerio (Zebrafish), this protein is Leucine-rich repeat-containing protein 3B (lrrc3b).